A 345-amino-acid chain; its full sequence is Holliday junction branch migration complex subunit RuvB (345 aa).

Residues 1 to 182 (MQRLVEVESV…FGMHFRMQFY (182 aa)) are large ATPase domain (RuvB-L). ATP-binding positions include Leu21, Arg22, Gly63, Lys66, Thr67, Thr68, 129–131 (EDY), Arg172, Tyr182, and Arg219. Thr67 contributes to the Mg(2+) binding site. Positions 183 to 253 (TEIELAKIIQ…RCKYALDELG (71 aa)) are small ATPAse domain (RuvB-S). Residues 256-345 (ESGFDEMDIN…EDDLTQGKLF (90 aa)) are head domain (RuvB-H). DNA-binding residues include Arg310 and Arg315.

This sequence belongs to the RuvB family. As to quaternary structure, homohexamer. Forms an RuvA(8)-RuvB(12)-Holliday junction (HJ) complex. HJ DNA is sandwiched between 2 RuvA tetramers; dsDNA enters through RuvA and exits via RuvB. An RuvB hexamer assembles on each DNA strand where it exits the tetramer. Each RuvB hexamer is contacted by two RuvA subunits (via domain III) on 2 adjacent RuvB subunits; this complex drives branch migration. In the full resolvosome a probable DNA-RuvA(4)-RuvB(12)-RuvC(2) complex forms which resolves the HJ.

The protein localises to the cytoplasm. It catalyses the reaction ATP + H2O = ADP + phosphate + H(+). The RuvA-RuvB-RuvC complex processes Holliday junction (HJ) DNA during genetic recombination and DNA repair, while the RuvA-RuvB complex plays an important role in the rescue of blocked DNA replication forks via replication fork reversal (RFR). RuvA specifically binds to HJ cruciform DNA, conferring on it an open structure. The RuvB hexamer acts as an ATP-dependent pump, pulling dsDNA into and through the RuvAB complex. RuvB forms 2 homohexamers on either side of HJ DNA bound by 1 or 2 RuvA tetramers; 4 subunits per hexamer contact DNA at a time. Coordinated motions by a converter formed by DNA-disengaged RuvB subunits stimulates ATP hydrolysis and nucleotide exchange. Immobilization of the converter enables RuvB to convert the ATP-contained energy into a lever motion, pulling 2 nucleotides of DNA out of the RuvA tetramer per ATP hydrolyzed, thus driving DNA branch migration. The RuvB motors rotate together with the DNA substrate, which together with the progressing nucleotide cycle form the mechanistic basis for DNA recombination by continuous HJ branch migration. Branch migration allows RuvC to scan DNA until it finds its consensus sequence, where it cleaves and resolves cruciform DNA. This chain is Holliday junction branch migration complex subunit RuvB, found in Aliarcobacter butzleri (strain RM4018) (Arcobacter butzleri).